Consider the following 1058-residue polypeptide: Translation initiation factor IF-2 (1058 aa).

The segment covering 1–12 (MNDTKTPGDKTL) has biased composition (basic and acidic residues). The disordered stretch occupies residues 1–468 (MNDTKTPGDK…MTGHRGMQES (468 aa)). Low complexity predominate over residues 54–81 (APGEAGAPSGTPAAAPAATPAPAAAAPR). Residues 82 to 95 (PATPAPAAPRPAAP) show a composition bias toward pro residues. Residues 96–108 (ATPAQPAAEAKAP) show a composition bias toward low complexity. Residues 109–119 (APAPTPAPAAP) are compositionally biased toward pro residues. Composition is skewed to low complexity over residues 120 to 156 (AAPV…VEVP) and 164 to 228 (EPVA…QRPG). Over residues 244-271 (RSGGPGSDRRGGPGGQNRPGQNRQGGSG) the composition is skewed to gly residues. Residues 292–364 (ARVREVEERR…ARKRFGEETG (73 aa)) are compositionally biased toward basic and acidic residues. The segment covering 368–396 (GASAPSTSTARPLTPRPAGTTTTTGAPAA) has biased composition (low complexity). Positions 452 to 461 (FRRRTQRMTG) are enriched in basic residues. Residues 555–725 (PRPPVVTIMG…SLQSEVLDLK (171 aa)) enclose the tr-type G domain. Residues 564–571 (GHVDHGKT) form a G1 region. 564 to 571 (GHVDHGKT) contacts GTP. A G2 region spans residues 589 to 593 (GITQH). Positions 611–614 (DTPG) are G3. Residues 611–615 (DTPGH) and 665–668 (NKID) contribute to the GTP site. Positions 665-668 (NKID) are G4. The G5 stretch occupies residues 701–703 (SAT).

Belongs to the TRAFAC class translation factor GTPase superfamily. Classic translation factor GTPase family. IF-2 subfamily.

It localises to the cytoplasm. Functionally, one of the essential components for the initiation of protein synthesis. Protects formylmethionyl-tRNA from spontaneous hydrolysis and promotes its binding to the 30S ribosomal subunits. Also involved in the hydrolysis of GTP during the formation of the 70S ribosomal complex. In Azorhizobium caulinodans (strain ATCC 43989 / DSM 5975 / JCM 20966 / LMG 6465 / NBRC 14845 / NCIMB 13405 / ORS 571), this protein is Translation initiation factor IF-2.